The primary structure comprises 316 residues: ATP synthase gamma chain (316 aa).

This sequence belongs to the ATPase gamma chain family. In terms of assembly, F-type ATPases have 2 components, CF(1) - the catalytic core - and CF(0) - the membrane proton channel. CF(1) has five subunits: alpha(3), beta(3), gamma(1), delta(1), epsilon(1). CF(0) has three main subunits: a, b and c.

The protein localises to the cellular thylakoid membrane. In terms of biological role, produces ATP from ADP in the presence of a proton gradient across the membrane. The gamma chain is believed to be important in regulating ATPase activity and the flow of protons through the CF(0) complex. The polypeptide is ATP synthase gamma chain (Synechococcus sp. (strain ATCC 27144 / PCC 6301 / SAUG 1402/1) (Anacystis nidulans)).